We begin with the raw amino-acid sequence, 98 residues long: Large ribosomal subunit protein uL23 (98 aa).

It belongs to the universal ribosomal protein uL23 family. Part of the 50S ribosomal subunit. Contacts protein L29, and trigger factor when it is bound to the ribosome.

Functionally, one of the early assembly proteins it binds 23S rRNA. One of the proteins that surrounds the polypeptide exit tunnel on the outside of the ribosome. Forms the main docking site for trigger factor binding to the ribosome. This chain is Large ribosomal subunit protein uL23, found in Rickettsia rickettsii (strain Iowa).